The primary structure comprises 306 residues: MELKDYYAIMGVKPTDDLKTIKTAYRRLARKYHPDVSKEPNAEARFKEVAEAWEVLSDEQRRAEYDQLWQHRNDPQFNRQFQQHEGQPYNAEDFDDIFSSIFGQHGRHSHHRHAARGHDIEIEVAVFLEETLEEHQRTISYSVPVYNAFGLVEREIPKTLNVKIPAGVSNGQRIRLKGQGTPGENGGPNGDLWLVIHIAPHPLFDIVNQDLEVVLPLAPWEAALGAKVSVPTLKERILLTIPPGSQAGQRLRIKGKGLASKKHTGDLYAIIKIVMPPKPDEKTAALWQQLADAQSSFDPRQQWGKA.

A J domain is found at 5-69; sequence DYYAIMGVKP…QRRAEYDQLW (65 aa).

It localises to the cytoplasm. The protein resides in the nucleoid. Its function is as follows. DNA-binding protein that preferentially recognizes a curved DNA sequence. It is probably a functional analog of DnaJ; displays overlapping activities with DnaJ, but functions under different conditions, probably acting as a molecular chaperone in an adaptive response to environmental stresses other than heat shock. Lacks autonomous chaperone activity; binds native substrates and targets them for recognition by DnaK. Its activity is inhibited by the binding of CbpM. This Salmonella choleraesuis (strain SC-B67) protein is Curved DNA-binding protein.